The primary structure comprises 152 residues: Zinc finger SWIM domain-containing protein 7 (152 aa).

An SWIM-type zinc finger spans residues 76–114 (YTCLASCHYCSCPAFSFSVLRKSDSLLCKHLLAIYLSQL).

This sequence belongs to the SWS1 family. As to quaternary structure, interacts with RAD51D and XRCC3; involved in homologous recombination repair. Interacts with SWSAP1; they form a functional complex involved in homologous recombination repair and stabilize each other.

It localises to the nucleus. In terms of biological role, involved in early stages of the homologous recombination repair (HRR) pathway of double-stranded DNA breaks arising during DNA replication or induced by DNA-damaging agents. Required for meiotic progression, hence for fertility. This is Zinc finger SWIM domain-containing protein 7 (Zswim7) from Mus musculus (Mouse).